Reading from the N-terminus, the 101-residue chain is Urease subunit beta (101 aa).

This sequence belongs to the urease beta subunit family. As to quaternary structure, heterotrimer of UreA (gamma), UreB (beta) and UreC (alpha) subunits. Three heterotrimers associate to form the active enzyme.

Its subcellular location is the cytoplasm. It catalyses the reaction urea + 2 H2O + H(+) = hydrogencarbonate + 2 NH4(+). Its pathway is nitrogen metabolism; urea degradation; CO(2) and NH(3) from urea (urease route): step 1/1. The chain is Urease subunit beta from Pseudomonas fluorescens (strain ATCC BAA-477 / NRRL B-23932 / Pf-5).